The chain runs to 168 residues: Large ribosomal subunit protein uL10 (168 aa).

The protein belongs to the universal ribosomal protein uL10 family. As to quaternary structure, part of the ribosomal stalk of the 50S ribosomal subunit. The N-terminus interacts with L11 and the large rRNA to form the base of the stalk. The C-terminus forms an elongated spine to which L12 dimers bind in a sequential fashion forming a multimeric L10(L12)X complex.

Its function is as follows. Forms part of the ribosomal stalk, playing a central role in the interaction of the ribosome with GTP-bound translation factors. In Clostridioides difficile (strain 630) (Peptoclostridium difficile), this protein is Large ribosomal subunit protein uL10.